The following is a 310-amino-acid chain: Tagatose-6-phosphate kinase (310 aa).

Belongs to the carbohydrate kinase PfkB family. LacC subfamily.

The enzyme catalyses D-tagatofuranose 6-phosphate + ATP = D-tagatofuranose 1,6-bisphosphate + ADP + H(+). It functions in the pathway carbohydrate metabolism; D-tagatose 6-phosphate degradation; D-glyceraldehyde 3-phosphate and glycerone phosphate from D-tagatose 6-phosphate: step 1/2. In Staphylococcus aureus (strain USA300 / TCH1516), this protein is Tagatose-6-phosphate kinase.